We begin with the raw amino-acid sequence, 307 residues long: Putative S-adenosyl-L-methionine-dependent methyltransferase Mflv_5025 (307 aa).

S-adenosyl-L-methionine contacts are provided by residues Asp130 and 159–160 (DL).

This sequence belongs to the UPF0677 family.

Exhibits S-adenosyl-L-methionine-dependent methyltransferase activity. The polypeptide is Putative S-adenosyl-L-methionine-dependent methyltransferase Mflv_5025 (Mycolicibacterium gilvum (strain PYR-GCK) (Mycobacterium gilvum (strain PYR-GCK))).